The following is a 126-amino-acid chain: Large ribosomal subunit protein bL12 (126 aa).

It belongs to the bacterial ribosomal protein bL12 family. Homodimer. Part of the ribosomal stalk of the 50S ribosomal subunit. Forms a multimeric L10(L12)X complex, where L10 forms an elongated spine to which 2 to 4 L12 dimers bind in a sequential fashion. Binds GTP-bound translation factors.

Its function is as follows. Forms part of the ribosomal stalk which helps the ribosome interact with GTP-bound translation factors. Is thus essential for accurate translation. This is Large ribosomal subunit protein bL12 from Beijerinckia indica subsp. indica (strain ATCC 9039 / DSM 1715 / NCIMB 8712).